A 417-amino-acid chain; its full sequence is Serine hydroxymethyltransferase (417 aa).

Residues leucine 121 and 125–127 contribute to the (6S)-5,6,7,8-tetrahydrofolate site; that span reads GHL. At lysine 229 the chain carries N6-(pyridoxal phosphate)lysine. 355–357 is a binding site for (6S)-5,6,7,8-tetrahydrofolate; sequence SPF.

Belongs to the SHMT family. Homodimer. The cofactor is pyridoxal 5'-phosphate.

It is found in the cytoplasm. The catalysed reaction is (6R)-5,10-methylene-5,6,7,8-tetrahydrofolate + glycine + H2O = (6S)-5,6,7,8-tetrahydrofolate + L-serine. It participates in one-carbon metabolism; tetrahydrofolate interconversion. The protein operates within amino-acid biosynthesis; glycine biosynthesis; glycine from L-serine: step 1/1. Its function is as follows. Catalyzes the reversible interconversion of serine and glycine with tetrahydrofolate (THF) serving as the one-carbon carrier. This reaction serves as the major source of one-carbon groups required for the biosynthesis of purines, thymidylate, methionine, and other important biomolecules. Also exhibits THF-independent aldolase activity toward beta-hydroxyamino acids, producing glycine and aldehydes, via a retro-aldol mechanism. The protein is Serine hydroxymethyltransferase of Klebsiella pneumoniae subsp. pneumoniae (strain ATCC 700721 / MGH 78578).